Reading from the N-terminus, the 153-residue chain is Myosin regulatory light chain LC-2, mantle muscle (153 aa).

A Blocked amino end (Ala) modification is found at alanine 1. EF-hand domains are found at residues arginine 13–valine 48 and aspartate 82–asparagine 117. Ca(2+)-binding residues include aspartate 26, aspartate 28, aspartate 30, and aspartate 37.

Functionally, in molluscan muscle, calcium regulation is associated with myosin rather than with actin. Muscle myosin contains two types of light chains: the catalytic light chain, essential for ATPase activity, and the regulatory light chain, a calcium-binding protein responsible for Ca(2+) dependent binding and Ca(2+) dependent Mg-ATPase activity. The protein is Myosin regulatory light chain LC-2, mantle muscle of Todarodes pacificus (Japanese flying squid).